Reading from the N-terminus, the 498-residue chain is Tumor necrosis factor receptor superfamily member 8 (498 aa).

The N-terminal stretch at 1–18 (MSALLTAAGLLFLGMLQA) is a signal peptide. Topologically, residues 19–287 (FPTDRPLKTT…STGTPFLDPG (269 aa)) are extracellular. TNFR-Cys repeat units follow at residues 68–105 (QCAPDYYVNEDGKCTACVTCLPGLVEKAPCSGNSPRIC) and 106–146 (ECQP…DTIC). 5 disulfides stabilise this stretch: Cys-69/Cys-81, Cys-84/Cys-97, Cys-87/Cys-105, Cys-107/Cys-121, and Cys-128/Cys-146. Residues 142–168 (KDTICELPSSGSGPNCSNPGDRKTLTS) form a disordered region. Positions 149 to 160 (PSSGSGPNCSNP) are enriched in low complexity. 3 N-linked (GlcNAc...) asparagine glycosylation sites follow: Asn-156, Asn-183, and Asn-229. The tract at residues 204-256 (ELVKVPESSSSKAREPSPDPGNAEKNMTLELPSPGTLPDISTSENSKEPASTA) is disordered. The span at 242-256 (DISTSENSKEPASTA) shows a compositional bias: polar residues. Residues 288-308 (PVLFWVAMVVLLVGSGSFLLC) traverse the membrane as a helical segment. Topologically, residues 309-498 (YWKACRRRFQ…DHGPTTVSEK (190 aa)) are cytoplasmic. Over residues 338-358 (DSCPTEKLTQPQRSGSVTDPS) the composition is skewed to polar residues. Disordered stretches follow at residues 338 to 370 (DSCPTEKLTQPQRSGSVTDPSTGHKLSPVSPPP), 389 to 411 (LDDSPAGNPFSPREPPEPRVSTE), and 436 to 498 (EVPE…VSEK). 2 positions are modified to phosphoserine: Ser-339 and Ser-353. Basic and acidic residues-rich tracts occupy residues 402-411 (EPPEPRVSTE), 456-465 (EVDHAPHYPE), and 484-498 (EGGKEDHGPTTVSEK).

Belongs to the TNFR8 family. Interacts with TRAF1, TRAF2, TRAF3 and TRAF5. Detected in thymus and in activated splenocytes.

Its subcellular location is the cell membrane. Its function is as follows. Receptor for TNFSF8/CD30L. May play a role in the regulation of cellular growth and transformation of activated lymphoblasts. Regulates gene expression through activation of NF-kappa-B. This Mus musculus (Mouse) protein is Tumor necrosis factor receptor superfamily member 8.